The primary structure comprises 473 residues: Sucrose-6-phosphate hydrolase (473 aa).

Substrate is bound by residues 44–47 (LLND), Gln-63, 106–107 (YS), 167–168 (RD), and Glu-224. Asp-47 is an active-site residue.

This sequence belongs to the glycosyl hydrolase 32 family.

It localises to the cytoplasm. The enzyme catalyses Hydrolysis of terminal non-reducing beta-D-fructofuranoside residues in beta-D-fructofuranosides.. It participates in glycan biosynthesis; sucrose metabolism. The chain is Sucrose-6-phosphate hydrolase (scrB) from Lactococcus lactis subsp. lactis (Streptococcus lactis).